The following is a 201-amino-acid chain: uncharacterized protein (201 aa).

The N-terminal stretch at 1–23 is a signal peptide; that stretch reads MKILYFIFVIIINILLILNHVKS. Residues 24-178 are Extracellular-facing; sequence KYNTFIFENT…GNYGEDPQRN (155 aa). N-linked (GlcNAc...) asparagine glycans are attached at residues asparagine 114 and asparagine 134. Positions 122-157 are disordered; the sequence is TPETPSPTENAPNTSGGSSEGNHYTYKSSSSSSEHI. Residues 123–148 show a composition bias toward polar residues; the sequence is PETPSPTENAPNTSGGSSEGNHYTYK. A helical transmembrane segment spans residues 179–199; that stretch reads IGISLSSSLIFISILFLIIFI. The Cytoplasmic portion of the chain corresponds to 200-201; the sequence is NN.

It is found in the membrane. This is an uncharacterized protein from Dictyostelium discoideum (Social amoeba).